The primary structure comprises 712 residues: MFNYYRKEIEWGGRPLVLETGKIARQADGAVVVTYGDTVVLCTAVGARSVKPGQDFFPLTVNYQEKAFAAGKIPGGFFKREGRPSEIEVLNSRLIDRPIRPLFPENFRNEVQVVATVLSHDLENDPAIAALIGCSAALTLSGIPFFGPVAACRVGYADGAYILNPTLPEMKESALDLVVAGTSEGVLMVESEASELSEDVMLGAVTFGHEAFQAVIDAIISLAEHAAKAPWDLAEPSAEEIALKQRIDTLGRAAIAEAYQERVKQQRYKKVGAAKEAVLAALATEGLDVTAAKPILKDLEADVVRSAVLDTGYRIDGRDLKTVRPIVSEVGILPRAHGSALFTRGETQALVVATLGTAQDEQVIDALEGEYRTNFMLHYNFPPYSVGECGRMGSPGRREIGHGKLAWRAIHPLLPGKDTFPYTMRIVSEITESNGSSSMATVCGTSLALMDAGVPLKRPVAGIAMGLIKEDRGFAVLSDILGDEDHLGDMDFKVAGTESGITALQMDIKITSITPEIMKIALGQARDGRLHILGEMSKALTEGRSDVSSTAPKITTISVPKEKIRDVIGQGGKVIREIVEYSGAKIDINDDGTIMIAASSEDQATRAIERIRGIVAEPELGAIYTGKVVKTADFGAFVNFLGARDGLVHISELAQGRVAKTTDVVNQGDVVKVKVLGFDDRGKVKLSMRVVDQQTGADITESVGERPGRPAR.

2 residues coordinate Mg(2+): aspartate 485 and aspartate 491. One can recognise a KH domain in the interval 552 to 611; that stretch reads PKITTISVPKEKIRDVIGQGGKVIREIVEYSGAKIDINDDGTIMIAASSEDQATRAIERI. In terms of domain architecture, S1 motif spans 621–689; that stretch reads GAIYTGKVVK…DRGKVKLSMR (69 aa).

Belongs to the polyribonucleotide nucleotidyltransferase family. It depends on Mg(2+) as a cofactor.

It is found in the cytoplasm. It catalyses the reaction RNA(n+1) + phosphate = RNA(n) + a ribonucleoside 5'-diphosphate. Functionally, involved in mRNA degradation. Catalyzes the phosphorolysis of single-stranded polyribonucleotides processively in the 3'- to 5'-direction. This is Polyribonucleotide nucleotidyltransferase from Gluconacetobacter diazotrophicus (strain ATCC 49037 / DSM 5601 / CCUG 37298 / CIP 103539 / LMG 7603 / PAl5).